The following is a 637-amino-acid chain: Nuclear receptor-binding protein homolog (637 aa).

The span at 1–14 (MSNSQANAGISGST) shows a compositional bias: polar residues. Disordered stretches follow at residues 1-60 (MSNS…TADA) and 74-99 (SEGV…ILEE). A compositionally biased stretch (low complexity) spans 36–46 (PAATPPSQSTQ). Acidic residues predominate over residues 88-98 (DDSEDESEILE). The Protein kinase domain maps to 109 to 375 (REEVDQRDVP…ANDLLFHPLL (267 aa)). 2 disordered regions span residues 465 to 489 (PNFR…EPVD) and 617 to 637 (PQEQ…TTSN). Phosphoserine occurs at positions 473, 479, and 482. Thr-484 bears the Phosphothreonine mark.

Belongs to the protein kinase superfamily. Ser/Thr protein kinase family.

The protein localises to the cytoplasm. Its subcellular location is the cell cortex. Its function is as follows. May play a role in subcellular trafficking between the endoplasmic reticulum and Golgi apparatus. The polypeptide is Nuclear receptor-binding protein homolog (Drosophila melanogaster (Fruit fly)).